The following is a 324-amino-acid chain: Viral cathepsin (324 aa).

An N-terminal signal peptide occupies residues 1–16 (MNKIVLYLLVYGATLG). A propeptide spans 17–113 (AAYDLLKAPS…VVLDRPPDKG (97 aa)) (activation peptide). Intrachain disulfides connect Cys134–Cys175, Cys168–Cys208, and Cys263–Cys311. Cys137 is an active-site residue. The N-linked (GlcNAc...) asparagine; by host glycan is linked to Asn159. Catalysis depends on residues His270 and Asn290.

The protein belongs to the peptidase C1 family. In terms of processing, synthesized as an inactive proenzyme and activated by proteolytic removal of the inhibitory propeptide.

The enzyme catalyses Endopeptidase of broad specificity, hydrolyzing substrates of both cathepsin L and cathepsin B.. In terms of biological role, cysteine protease that plays an essential role in host liquefaction to facilitate horizontal transmission of the virus. May participate in the degradation of foreign protein expressed by the baculovirus system. In Antheraea pernyi nuclear polyhedrosis virus (ApNPV), this protein is Viral cathepsin (VCATH).